A 500-amino-acid polypeptide reads, in one-letter code: Probable malate:quinone oxidoreductase (500 aa).

This sequence belongs to the MQO family. FAD serves as cofactor.

The catalysed reaction is (S)-malate + a quinone = a quinol + oxaloacetate. Its pathway is carbohydrate metabolism; tricarboxylic acid cycle; oxaloacetate from (S)-malate (quinone route): step 1/1. The sequence is that of Probable malate:quinone oxidoreductase from Corynebacterium glutamicum (strain R).